Reading from the N-terminus, the 112-residue chain is UPF0482 protein Ent638_1930 (112 aa).

Residues 1–27 (MTTLRKRLCLATLLSLTALAFTAPVSA) form the signal peptide.

This sequence belongs to the UPF0482 family.

This is UPF0482 protein Ent638_1930 from Enterobacter sp. (strain 638).